The following is a 157-amino-acid chain: Endoribonuclease YbeY (157 aa).

Zn(2+)-binding residues include His114, His118, and His124.

This sequence belongs to the endoribonuclease YbeY family. Requires Zn(2+) as cofactor.

It is found in the cytoplasm. Functionally, single strand-specific metallo-endoribonuclease involved in late-stage 70S ribosome quality control and in maturation of the 3' terminus of the 16S rRNA. The protein is Endoribonuclease YbeY of Yersinia enterocolitica serotype O:8 / biotype 1B (strain NCTC 13174 / 8081).